Reading from the N-terminus, the 212-residue chain is ATP-dependent Clp protease proteolytic subunit (212 aa).

Ser109 (nucleophile) is an active-site residue. Residue His134 is part of the active site.

Belongs to the peptidase S14 family. In terms of assembly, fourteen ClpP subunits assemble into 2 heptameric rings which stack back to back to give a disk-like structure with a central cavity, resembling the structure of eukaryotic proteasomes.

Its subcellular location is the cytoplasm. It catalyses the reaction Hydrolysis of proteins to small peptides in the presence of ATP and magnesium. alpha-casein is the usual test substrate. In the absence of ATP, only oligopeptides shorter than five residues are hydrolyzed (such as succinyl-Leu-Tyr-|-NHMec, and Leu-Tyr-Leu-|-Tyr-Trp, in which cleavage of the -Tyr-|-Leu- and -Tyr-|-Trp bonds also occurs).. Functionally, cleaves peptides in various proteins in a process that requires ATP hydrolysis. Has a chymotrypsin-like activity. Plays a major role in the degradation of misfolded proteins. In Bdellovibrio bacteriovorus (strain ATCC 15356 / DSM 50701 / NCIMB 9529 / HD100), this protein is ATP-dependent Clp protease proteolytic subunit.